The sequence spans 317 residues: Melanocyte-stimulating hormone receptor (317 aa).

A disordered region spans residues 1–26 (MPVQGSPRSLLGAVNSTPTATPHLRP). Residues 1–37 (MPVQGSPRSLLGAVNSTPTATPHLRPAANQTGPQCLE) lie on the Extracellular side of the membrane. A glycan (N-linked (GlcNAc...) asparagine) is linked at Asn-29. The chain crosses the membrane as a helical span at residues 38-63 (VSIPDGLFLCLGLVSLVENTLVVAAI). The Cytoplasmic segment spans residues 64–72 (AKNRNLHSP). Residues 73–93 (MYCFVCCLALSDLLVSVSSVL) form a helical membrane-spanning segment. The Extracellular segment spans residues 94-118 (ETAVLLLLGAGALAAQATVVQLLGN). Residues 119–140 (VIDVLLCSSMVSSLFFLGAIAM) traverse the membrane as a helical segment. The Cytoplasmic segment spans residues 141–163 (DRYISIFYALRYHSIVTLARARR). A helical membrane pass occupies residues 164–183 (AIAAIWAASMLSSTLFIAYC). The Extracellular segment spans residues 184–191 (DHTAALLC). A helical membrane pass occupies residues 192-211 (LVVFFLAMLVLMAVLYVHML). Residues 212-240 (TQACQHAQGIARLHKRQRPVQQGWGLKGA) are Cytoplasmic-facing. The helical transmembrane segment at 241 to 266 (ATLAILLGVFFLCWGPFFLHLTLIAV) threads the bilayer. Over 267-279 (CPQHPTCSCIFKN) the chain is Extracellular. Residues 280 to 300 (FRLFLALIVCNAIVDPLIYAF) traverse the membrane as a helical segment. Residues 301-317 (RSQELCKTLKELLLFSW) lie on the Cytoplasmic side of the membrane.

Belongs to the G-protein coupled receptor 1 family. Interacts with MGRN1, but does not undergo MGRN1-mediated ubiquitination; this interaction competes with GNAS-binding and thus inhibits agonist-induced cAMP production. Interacts with OPN3; the interaction results in a decrease in MC1R-mediated cAMP signaling and ultimately a decrease in melanin production in melanocytes.

The protein localises to the cell membrane. Its function is as follows. Receptor for MSH (alpha, beta and gamma) and ACTH. The activity of this receptor is mediated by G proteins which activate adenylate cyclase. Mediates melanogenesis, the production of eumelanin (black/brown) and phaeomelanin (red/yellow), via regulation of cAMP signaling in melanocytes. This chain is Melanocyte-stimulating hormone receptor (MC1R), found in Hapalemur griseus (Gray gentle lemur).